The following is a 146-amino-acid chain: MDLNTLLETTVVGLGYELVDVEMSPRGRTIRVFIDAPAKETGIDVEDCAKVSNQLTRVFEVENFDFDRLEISSPGLDRVVKKAADFERFSGQEIQIKVRIPQGGRRNFQGELLGLKDGKVGLRLAKDDVELEFTNIEKARLVPRFD.

This sequence belongs to the RimP family.

It is found in the cytoplasm. Required for maturation of 30S ribosomal subunits. This Dechloromonas aromatica (strain RCB) protein is Ribosome maturation factor RimP.